We begin with the raw amino-acid sequence, 361 residues long: S-adenosylmethionine:tRNA ribosyltransferase-isomerase (361 aa).

It belongs to the QueA family. Monomer.

The protein localises to the cytoplasm. It carries out the reaction 7-aminomethyl-7-carbaguanosine(34) in tRNA + S-adenosyl-L-methionine = epoxyqueuosine(34) in tRNA + adenine + L-methionine + 2 H(+). It participates in tRNA modification; tRNA-queuosine biosynthesis. In terms of biological role, transfers and isomerizes the ribose moiety from AdoMet to the 7-aminomethyl group of 7-deazaguanine (preQ1-tRNA) to give epoxyqueuosine (oQ-tRNA). In Actinobacillus pleuropneumoniae serotype 3 (strain JL03), this protein is S-adenosylmethionine:tRNA ribosyltransferase-isomerase.